Reading from the N-terminus, the 69-residue chain is Conotoxin Eb6.21 (69 aa).

The N-terminal stretch at 1-17 (VLIIAVLFLTACQLTTA) is a signal peptide. Positions 18-41 (ETYSRGRQKHRARRSTDKNSKWTR) are excised as a propeptide. 3 cysteine pairs are disulfide-bonded: Cys43-Cys57, Cys50-Cys61, and Cys56-Cys68.

It belongs to the conotoxin O1 superfamily. In terms of tissue distribution, expressed by the venom duct.

It is found in the secreted. The polypeptide is Conotoxin Eb6.21 (E1) (Conus ebraeus (Hebrew cone)).